Consider the following 192-residue polypeptide: MSKPNVAIIVAALKPALGIGYKGKMPWRLRKEIRYFKDVTTRTTKPNTRNAVIMGRKTWESIPQKFRPLPDRLNIILSRSYENKIIDDNIIHASSIESSLNLVSDVERVFIIGGAEIYNELINNSLVSHLLITEIEHPSPESIEMDTFLKFPLESWTKQPKSELQKFVGDTVLEDDIKEGDFTYNYTLWTRK.

Positions 5-191 (NVAIIVAALK…FTYNYTLWTR (187 aa)) constitute a DHFR domain. NADP(+) contacts are provided by residues alanine 11 and 18–24 (GIGYKGK). 32–37 (EIRYFK) is a binding site for substrate. Residue 56–58 (RKT) participates in NADP(+) binding. Substrate is bound at residue arginine 72. An NADP(+)-binding site is contributed by 78–80 (SRS). Residues isoleucine 112 and tyrosine 118 each contribute to the substrate site. 113-120 (GGAEIYNE) is an NADP(+) binding site.

It belongs to the dihydrofolate reductase family.

It catalyses the reaction (6S)-5,6,7,8-tetrahydrofolate + NADP(+) = 7,8-dihydrofolate + NADPH + H(+). Its pathway is cofactor biosynthesis; tetrahydrofolate biosynthesis; 5,6,7,8-tetrahydrofolate from 7,8-dihydrofolate: step 1/1. Its function is as follows. Key enzyme in folate metabolism. Catalyzes an essential reaction for de novo glycine and purine synthesis, and for DNA precursor synthesis. This is Dihydrofolate reductase (DFR1) from Candida albicans (Yeast).